The primary structure comprises 291 residues: Small ribosomal subunit protein uS2 (291 aa).

The interval Leu-256 to Val-291 is disordered. A compositionally biased stretch (low complexity) spans Thr-261–Val-291.

Belongs to the universal ribosomal protein uS2 family.

This chain is Small ribosomal subunit protein uS2, found in Frankia alni (strain DSM 45986 / CECT 9034 / ACN14a).